Consider the following 452-residue polypeptide: Pup--protein ligase (452 aa).

Glu9 contacts Mg(2+). Arg53 serves as a coordination point for ATP. Tyr55 contacts Mg(2+). The active-site Proton acceptor is Asp57. Glu63 is a binding site for Mg(2+). ATP contacts are provided by Thr66 and Trp419.

It belongs to the Pup ligase/Pup deamidase family. Pup-conjugating enzyme subfamily.

The enzyme catalyses ATP + [prokaryotic ubiquitin-like protein]-L-glutamate + [protein]-L-lysine = ADP + phosphate + N(6)-([prokaryotic ubiquitin-like protein]-gamma-L-glutamyl)-[protein]-L-lysine.. The protein operates within protein degradation; proteasomal Pup-dependent pathway. Its pathway is protein modification; protein pupylation. Functionally, catalyzes the covalent attachment of the prokaryotic ubiquitin-like protein modifier Pup to the proteasomal substrate proteins, thereby targeting them for proteasomal degradation. This tagging system is termed pupylation. The ligation reaction involves the side-chain carboxylate of the C-terminal glutamate of Pup and the side-chain amino group of a substrate lysine. The chain is Pup--protein ligase from Rhodococcus erythropolis (strain PR4 / NBRC 100887).